Reading from the N-terminus, the 125-residue chain is Secreted RxLR effector protein 55 (125 aa).

An N-terminal signal peptide occupies residues 1–21 (MAASRSSITTLLLLIVAVALG). The RxLR motif lies at 35–38 (RQLR). A compositionally biased stretch (low complexity) spans 51-87 (ESATSSSSSSALDHKSSAPGEATNASETEHSAASTAS). A disordered region spans residues 51–96 (ESATSSSSSSALDHKSSAPGEATNASETEHSAASTASEPKHEGPTM). An N-linked (GlcNAc...) asparagine glycan is attached at asparagine 74. The chain crosses the membrane as a helical span at residues 99–119 (FVGPAAAGVLAILLIGAVIAF).

Belongs to the RxLR effector family.

It is found in the secreted. Its subcellular location is the host cell membrane. Its function is as follows. Effector that acts as a broad suppressor of cell death to interrupt plant immunity. Inhibits cell death induced by cell death-inducing proteins, including the PAMP elicitor INF1 from P.infestans. This is Secreted RxLR effector protein 55 from Plasmopara viticola (Downy mildew of grapevine).